The chain runs to 175 residues: Inorganic pyrophosphatase (175 aa).

Substrate-binding residues include lysine 29, arginine 43, and tyrosine 55. Mg(2+) is bound by residues aspartate 65, aspartate 70, and aspartate 102. Residue tyrosine 141 participates in substrate binding.

It belongs to the PPase family. Homohexamer. Mg(2+) is required as a cofactor.

It is found in the cytoplasm. It carries out the reaction diphosphate + H2O = 2 phosphate + H(+). Catalyzes the hydrolysis of inorganic pyrophosphate (PPi) forming two phosphate ions. The protein is Inorganic pyrophosphatase of Rickettsia bellii (strain RML369-C).